The primary structure comprises 240 residues: MSLLIVANWKMYGDFLTFSSFTKELSANLVNVKADVEVVLCPPFIACSKIVDCAPNIKLGAQNCFYESEGKYTGEVSAKMLYSCGCSYVIVGHYERRSIFYESDYCVQLKAKSAIDAGLIPIICIGETLLDRENGMLKNALLDQCYNSFPKHGEFVIAYEPVWAIGSNTIPSIDMITESLDIIRSYDSKSNIIYGGAVNQSNIKDVIAINQLSGVLVGSASLKVSSFCDIIYGAVNVRQN.

8-10 (NWK) is a binding site for substrate. The active-site Electrophile is H93. Residue E160 is the Proton acceptor of the active site. Residue G166 coordinates substrate.

Belongs to the triosephosphate isomerase family. Homodimer.

Its subcellular location is the cytoplasm. It carries out the reaction D-glyceraldehyde 3-phosphate = dihydroxyacetone phosphate. It functions in the pathway carbohydrate biosynthesis; gluconeogenesis. It participates in carbohydrate degradation; glycolysis; D-glyceraldehyde 3-phosphate from glycerone phosphate: step 1/1. Functionally, involved in the gluconeogenesis. Catalyzes stereospecifically the conversion of dihydroxyacetone phosphate (DHAP) to D-glyceraldehyde-3-phosphate (G3P). In Ehrlichia chaffeensis (strain ATCC CRL-10679 / Arkansas), this protein is Triosephosphate isomerase.